A 276-amino-acid polypeptide reads, in one-letter code: Neuroendocrine protein 7B2 (276 aa).

C155 and C168 form a disulfide bridge.

Belongs to the 7B2 family. As to quaternary structure, interacts with amon/PC2 early in the secretory pathway. Dissociation occurs at later stages.

It is found in the secreted. Functionally, acts as a molecular chaperone for neuroendocrine convertase amon/PC2, preventing its premature activation in the regulated secretory pathway. Binds to inactive amon in the endoplasmic reticulum and facilitates its transport from there to later compartments of the secretory pathway where it is proteolytically matured and activated. Also required for cleavage of amon. In Drosophila melanogaster (Fruit fly), this protein is Neuroendocrine protein 7B2.